Reading from the N-terminus, the 79-residue chain is uncharacterized protein (79 aa).

Residues 3-54 (SKKNKIVAALLAFFFGGLGIHKFYLGRVGQGILYILFCWTGIPSIIAFIEFI) form the TM2 domain. The next 2 membrane-spanning stretches (helical) occupy residues 8–28 (IVAA…FYLG) and 37–57 (ILFC…IIFL).

The protein resides in the cell membrane. This is an uncharacterized protein from Bacillus subtilis (strain 168).